Consider the following 320-residue polypeptide: Malate dehydrogenase (320 aa).

NAD(+) contacts are provided by residues 10 to 15 and Asp-34; that span reads GAGQIG. Substrate contacts are provided by Arg-83 and Arg-89. Residues Asn-96 and 119 to 121 contribute to the NAD(+) site; that span reads ITN. Substrate-binding residues include Asn-121 and Arg-152. Residue His-176 is the Proton acceptor of the active site.

It belongs to the LDH/MDH superfamily. MDH type 3 family.

It catalyses the reaction (S)-malate + NAD(+) = oxaloacetate + NADH + H(+). In terms of biological role, catalyzes the reversible oxidation of malate to oxaloacetate. The polypeptide is Malate dehydrogenase (Methylorubrum populi (strain ATCC BAA-705 / NCIMB 13946 / BJ001) (Methylobacterium populi)).